A 267-amino-acid chain; its full sequence is Tryptophan synthase alpha chain (267 aa).

Active-site proton acceptor residues include glutamate 49 and aspartate 60.

It belongs to the TrpA family. In terms of assembly, tetramer of two alpha and two beta chains.

It carries out the reaction (1S,2R)-1-C-(indol-3-yl)glycerol 3-phosphate + L-serine = D-glyceraldehyde 3-phosphate + L-tryptophan + H2O. The protein operates within amino-acid biosynthesis; L-tryptophan biosynthesis; L-tryptophan from chorismate: step 5/5. Functionally, the alpha subunit is responsible for the aldol cleavage of indoleglycerol phosphate to indole and glyceraldehyde 3-phosphate. The chain is Tryptophan synthase alpha chain from Carboxydothermus hydrogenoformans (strain ATCC BAA-161 / DSM 6008 / Z-2901).